The chain runs to 406 residues: Tryptophan 2,3-dioxygenase A (406 aa).

Residues 71–75 (FIVTH) and arginine 143 each bind substrate. Histidine 327 serves as a coordination point for heme. Threonine 341 lines the substrate pocket.

Belongs to the tryptophan 2,3-dioxygenase family. In terms of assembly, homotetramer. Dimer of dimers. Heme is required as a cofactor.

It catalyses the reaction L-tryptophan + O2 = N-formyl-L-kynurenine. Its pathway is amino-acid degradation; L-tryptophan degradation via kynurenine pathway; L-kynurenine from L-tryptophan: step 1/2. Functionally, heme-dependent dioxygenase that catalyzes the oxidative cleavage of the L-tryptophan (L-Trp) pyrrole ring and converts L-tryptophan to N-formyl-L-kynurenine. Catalyzes the oxidative cleavage of the indole moiety. The polypeptide is Tryptophan 2,3-dioxygenase A (Danio rerio (Zebrafish)).